The following is a 163-amino-acid chain: uncharacterized protein (163 aa).

Residues 142-163 form a disordered region; sequence PQIVISEHNNTKETSPSRQFEH. The span at 153 to 163 shows a compositional bias: polar residues; sequence KETSPSRQFEH.

Belongs to the RCAN family.

Its function is as follows. Inhibits calcineurin-dependent transcriptional responses by binding to the catalytic domain of calcineurin. This is an uncharacterized protein from Schizosaccharomyces pombe (strain 972 / ATCC 24843) (Fission yeast).